A 287-amino-acid polypeptide reads, in one-letter code: MPPLWVVLALGCLRLGSGVNLQPQLASVTFATNNPTLTTVALEKPLCMFDSSAALHGTYEVYLYVLVDSASFRNASVQDSTKTPLSSTFQQTQGGRTGPYKAAAFDLTPCSDSPSLDAVRDVSRASEILNAYLIRVGTNGTCLLDPNFQGLCNPPLSAATEYRFKYVLVNMSSGLVQDQTLWSDPIRTDRLTLYSAIDTWPGRRSGGMIVITSILGSLPFFLLIGFAGAIVLSLVDRGDADGATSHDSQITQEAVPKSLGTSEPSYTSVNRGPSLDRAEVYASKLQD.

An N-terminal signal peptide occupies residues 1–18 (MPPLWVVLALGCLRLGSG). At 19–207 (VNLQPQLASV…DTWPGRRSGG (189 aa)) the chain is on the lumenal side. N-linked (GlcNAc...) asparagine glycans are attached at residues asparagine 74, asparagine 139, and asparagine 170. The helical transmembrane segment at 208-235 (MIVITSILGSLPFFLLIGFAGAIVLSLV) threads the bilayer. Residues 236–287 (DRGDADGATSHDSQITQEAVPKSLGTSEPSYTSVNRGPSLDRAEVYASKLQD) lie on the Cytoplasmic side of the membrane. The interval 243–274 (ATSHDSQITQEAVPKSLGTSEPSYTSVNRGPS) is disordered. The segment covering 259–271 (LGTSEPSYTSVNR) has biased composition (polar residues).

The protein belongs to the uroplakin-3 family. Heterodimer with uroplakin-1B (UPK1B). In terms of tissue distribution, bladder epithelium.

The protein resides in the endoplasmic reticulum membrane. Component of the asymmetric unit membrane (AUM); a highly specialized biomembrane elaborated by terminally differentiated urothelial cells. May play an important role in AUM-cytoskeleton interaction in terminally differentiated urothelial cells. It also contributes to the formation of urothelial glycocalyx which may play an important role in preventing bacterial adherence. In Bos taurus (Bovine), this protein is Uroplakin-3a (UPK3A).